Here is a 962-residue protein sequence, read N- to C-terminus: Nonribosomal peptide synthetase atqA (962 aa).

The adenylation (A) domain stretch occupies residues 34-462; that stretch reads AANTTEGIIA…DGRTKEMVNI (429 aa). The region spanning 595–672 is the Carrier domain; it reads SAEEATILSI…GLCQRIAATS (78 aa). Ser-630 carries the O-(pantetheine 4'-phosphoryl)serine modification. Positions 694 to 951 are thioesterase (TE) domain; sequence PLWLVHPGVG…KPEYVANFAK (258 aa).

This sequence belongs to the NRP synthetase family.

Its pathway is secondary metabolite biosynthesis. Functionally, nonribosomal peptide synthetase; part of the gene cluster that mediates the biosynthesis of asterriquinone CT5, a natural product that displays potential biological activities including antitumor and insulin mimic activities. The nonribosomal peptide synthetase atqA is responsible for the production of the benzoquinone derivative didemethylasterriquinone D (DDAQ D), via condensation of 2 indole pyruvic acid (IPA) molecules. The symmetric connectivity of the 2 IPA molecules is thought to arise by head-to-tail dual Claisen condensations catalyzed by the TE domain of atqA. DDAQ D represents the core structure of asterriquinones and is further modified by yet unidentified tailoring enzymes to lead to the production of asterriquinone CT5. This chain is Nonribosomal peptide synthetase atqA, found in Aspergillus terreus (strain NIH 2624 / FGSC A1156).